Consider the following 402-residue polypeptide: uncharacterized protein (402 aa).

Over 1–12 (MFQQLSASIRHN) the chain is Cytoplasmic. Residues 13–33 (AHIIFLCISWYFISSLASQVT) form a helical membrane-spanning segment. At 34–50 (KQVLTVCPLPLFLGEFQ) the chain is on the extracellular side. A helical transmembrane segment spans residues 51–71 (FIYTAVLAWFTCYIAYSFPGF). Residues 72-103 (YRIFPNGTFPEYYIDDRETSRAARKESKLSSL) lie on the Cytoplasmic side of the membrane. The helical transmembrane segment at 104–124 (IIPPSKPILQTVLPLGLFQFV) threads the bilayer. At 125 to 134 (GKYFGHTATS) the chain is on the extracellular side. A helical membrane pass occupies residues 135–155 (LVPVSTVASIKTLSPMFILLL). Residues 156–165 (QKILKISTLK) lie on the Cytoplasmic side of the membrane. Residues 166-186 (ITLTLIFSLCTLVLGVWIIVQ) form a helical membrane-spanning segment. The Extracellular segment spans residues 187–206 (EDNRSPASSNELREFSKYGV). Residues 207–227 (ICAMISMFIFVLQNIYGKTVF) traverse the membrane as a helical segment. The Cytoplasmic segment spans residues 228 to 271 (TYRSQTDESQSNSGFSRQESPLPLYEKLDEKLVAKKKPKSYDKL). Residues 272-292 (TLMIYISLVGFCLSFGWFITL) traverse the membrane as a helical segment. Residues 293 to 353 (EFPVLFRYFF…TYSIANLMKR (61 aa)) lie on the Extracellular side of the membrane. The helical transmembrane segment at 354 to 374 (FAIIAVSWVFIGRRITWLQVF) threads the bilayer. The Cytoplasmic portion of the chain corresponds to 375–402 (GLVLNTLGLFLYERCTSQSKIKAKIRPE).

It belongs to the TPT transporter family.

The protein localises to the membrane. This is an uncharacterized protein from Saccharomyces cerevisiae (strain ATCC 204508 / S288c) (Baker's yeast).